The primary structure comprises 160 residues: Large ribosomal subunit protein uL13 (160 aa).

It belongs to the universal ribosomal protein uL13 family. In terms of assembly, part of the 50S ribosomal subunit.

Functionally, this protein is one of the early assembly proteins of the 50S ribosomal subunit, although it is not seen to bind rRNA by itself. It is important during the early stages of 50S assembly. This is Large ribosomal subunit protein uL13 from Orientia tsutsugamushi (strain Ikeda) (Rickettsia tsutsugamushi).